Reading from the N-terminus, the 341-residue chain is HTH-type transcriptional repressor CytR (341 aa).

Positions 10–64 constitute an HTH lacI-type domain; sequence ATMKDVALKAKVSTATVSRALMNPDKVSQATRNRVEKAAREVGYLPQPMGRNVKR. A DNA-binding region (H-T-H motif) is located at residues 12–31; the sequence is MKDVALKAKVSTATVSRALM.

Its function is as follows. This protein negatively controls the transcription initiation of genes such as deoCABD, udp, and cdd encoding catabolizing enzymes and nupC, nupG, and tsx encoding transporting and pore-forming proteins. Binds cytidine and adenosine as effectors. In Escherichia coli (strain K12), this protein is HTH-type transcriptional repressor CytR (cytR).